Consider the following 706-residue polypeptide: Acyl-coenzyme A oxidase (706 aa).

The disordered stretch occupies residues 682–706 (MLNRPSKEERERFEKSTETAKILSK). A compositionally biased stretch (basic and acidic residues) spans 686–699 (PSKEERERFEKSTE).

The protein belongs to the acyl-CoA oxidase family. Requires FAD as cofactor.

The protein resides in the peroxisome. The enzyme catalyses a 2,3-saturated acyl-CoA + O2 = a (2E)-enoyl-CoA + H2O2. It functions in the pathway lipid metabolism; peroxisomal fatty acid beta-oxidation. The protein is Acyl-coenzyme A oxidase (POX1) of Debaryomyces hansenii (strain ATCC 36239 / CBS 767 / BCRC 21394 / JCM 1990 / NBRC 0083 / IGC 2968) (Yeast).